The following is a 259-amino-acid chain: TCF3 fusion partner homolog (259 aa).

Disordered stretches follow at residues 50 to 72 (GGLG…GRRR) and 141 to 210 (EDDG…APVQ). Ser-167 is modified (phosphoserine). Polar residues predominate over residues 167-178 (SPSQRTTATLDP). Phosphothreonine is present on Thr-172. A phosphoserine mark is found at Ser-180 and Ser-188. Residue Thr-203 is modified to Phosphothreonine. A Glycyl lysine isopeptide (Lys-Gly) (interchain with G-Cter in SUMO2) cross-link involves residue Lys-222. Phosphoserine is present on Ser-255.

As to quaternary structure, interacts with NOL3; translocates NOL3 into the nucleus and negatively regulated TFPT-induced cell death. Component of the chromatin remodeling INO80 complex; specifically part of a complex module associated with the N-terminus of INO80.

The protein localises to the nucleus. Appears to promote apoptosis in a p53/TP53-independent manner. Functionally, putative regulatory component of the chromatin remodeling INO80 complex which is involved in transcriptional regulation, DNA replication and probably DNA repair. This Mus musculus (Mouse) protein is TCF3 fusion partner homolog (Tfpt).